Here is a 464-residue protein sequence, read N- to C-terminus: tRNA modification GTPase MnmE (464 aa).

3 residues coordinate (6S)-5-formyl-5,6,7,8-tetrahydrofolate: R25, E87, and K130. The 161-residue stretch at 226 to 386 folds into the TrmE-type G domain; the sequence is GLSVVLAGQP…LRAELLRIAG (161 aa). N236 contributes to the K(+) binding site. Residues 236 to 241, 255 to 261, and 280 to 283 contribute to the GTP site; these read NVGKSS, TPIAGTT, and DTAG. S240 is a binding site for Mg(2+). K(+) contacts are provided by T255, I257, and T260. T261 is a binding site for Mg(2+). Position 464 (K464) interacts with (6S)-5-formyl-5,6,7,8-tetrahydrofolate.

It belongs to the TRAFAC class TrmE-Era-EngA-EngB-Septin-like GTPase superfamily. TrmE GTPase family. Homodimer. Heterotetramer of two MnmE and two MnmG subunits. K(+) serves as cofactor.

The protein resides in the cytoplasm. Exhibits a very high intrinsic GTPase hydrolysis rate. Involved in the addition of a carboxymethylaminomethyl (cmnm) group at the wobble position (U34) of certain tRNAs, forming tRNA-cmnm(5)s(2)U34. This chain is tRNA modification GTPase MnmE, found in Burkholderia ambifaria (strain ATCC BAA-244 / DSM 16087 / CCUG 44356 / LMG 19182 / AMMD) (Burkholderia cepacia (strain AMMD)).